Here is a 459-residue protein sequence, read N- to C-terminus: Elongation factor 1-alpha (459 aa).

Gly2 is modified (n,N,N-trimethylglycine). Lys3 is modified (N6,N6-dimethyllysine; alternate). Lys3 bears the N6-methyllysine; alternate mark. In terms of domain architecture, tr-type G spans 5 to 240 (KLHVNVVVIG…DAIEPPTRPT (236 aa)). Residues 14–21 (GHVDSGKS) are G1. Residue 14 to 21 (GHVDSGKS) participates in GTP binding. Lys30 carries the post-translational modification N6-methyllysine. The segment at 70–74 (GITID) is G2. Position 79 is an N6,N6,N6-trimethyllysine (Lys79). The interval 91 to 94 (DAPG) is G3. Residues 91–95 (DAPGH) and 153–156 (NKMD) contribute to the GTP site. The segment at 153–156 (NKMD) is G4. The segment at 192–194 (SGW) is G5. An N6,N6-dimethyllysine; alternate modification is found at Lys316. At Lys316 the chain carries N6-methyllysine; alternate. Lys390 carries the post-translational modification N6-methyllysine.

The protein belongs to the TRAFAC class translation factor GTPase superfamily. Classic translation factor GTPase family. EF-Tu/EF-1A subfamily.

The protein resides in the cytoplasm. Its function is as follows. This protein promotes the GTP-dependent binding of aminoacyl-tRNA to the A-site of ribosomes during protein biosynthesis. The chain is Elongation factor 1-alpha (TEF1) from Cryptococcus neoformans var. neoformans serotype D (strain B-3501A) (Filobasidiella neoformans).